The primary structure comprises 547 residues: T-complex protein 1 subunit alpha (547 aa).

This sequence belongs to the TCP-1 chaperonin family. As to quaternary structure, heterooligomeric complex of about 850 to 900 kDa that forms two stacked rings, 12 to 16 nm in diameter.

The protein resides in the cytoplasm. Its function is as follows. Molecular chaperone; assists the folding of proteins upon ATP hydrolysis. Known to play a role, in vitro, in the folding of actin and tubulin. The chain is T-complex protein 1 subunit alpha from Tetrahymena pyriformis.